A 311-amino-acid polypeptide reads, in one-letter code: Heparan sulfate glucosamine 3-O-sulfotransferase 1 (311 aa).

Residues 1–20 (MTLLLLGAVLLVAQPQLVPS) form the signal peptide. N-linked (GlcNAc...) asparagine glycosylation is present at Asn52. Residues 68–72 (KGGTR), Arg151, and Ser159 contribute to the 3'-phosphoadenylyl sulfate site. Asn196, Asn246, and Asn253 each carry an N-linked (GlcNAc...) asparagine glycan. Tyr259 is a 3'-phosphoadenylyl sulfate binding site. Cys260 and Cys269 form a disulfide bridge. 274–278 (KGRAH) lines the 3'-phosphoadenylyl sulfate pocket.

It belongs to the sulfotransferase 1 family.

Its subcellular location is the golgi apparatus lumen. The enzyme catalyses alpha-D-glucosaminyl-[heparan sulfate](n) + 3'-phosphoadenylyl sulfate = 3-sulfo-alpha-D-glucosaminyl-[heparan sulfate](n) + adenosine 3',5'-bisphosphate + H(+). Functionally, sulfotransferase that utilizes 3'-phospho-5'-adenylyl sulfate (PAPS) to catalyze the transfer of a sulfo group to position 3 of glucosamine residues in heparan. Catalyzes the rate limiting step in the biosynthesis of heparan sulfate (HSact). This modification is a crucial step in the biosynthesis of anticoagulant heparan sulfate as it completes the structure of the antithrombin pentasaccharide binding site. This chain is Heparan sulfate glucosamine 3-O-sulfotransferase 1 (Hs3st1), found in Rattus norvegicus (Rat).